The primary structure comprises 222 residues: UPF0128 protein TK2294 (222 aa).

It belongs to the UPF0128 family.

The polypeptide is UPF0128 protein TK2294 (Thermococcus kodakarensis (strain ATCC BAA-918 / JCM 12380 / KOD1) (Pyrococcus kodakaraensis (strain KOD1))).